The following is a 571-amino-acid chain: Proline--tRNA ligase (571 aa).

The protein belongs to the class-II aminoacyl-tRNA synthetase family. ProS type 1 subfamily. In terms of assembly, homodimer.

Its subcellular location is the cytoplasm. It catalyses the reaction tRNA(Pro) + L-proline + ATP = L-prolyl-tRNA(Pro) + AMP + diphosphate. Catalyzes the attachment of proline to tRNA(Pro) in a two-step reaction: proline is first activated by ATP to form Pro-AMP and then transferred to the acceptor end of tRNA(Pro). As ProRS can inadvertently accommodate and process non-cognate amino acids such as alanine and cysteine, to avoid such errors it has two additional distinct editing activities against alanine. One activity is designated as 'pretransfer' editing and involves the tRNA(Pro)-independent hydrolysis of activated Ala-AMP. The other activity is designated 'posttransfer' editing and involves deacylation of mischarged Ala-tRNA(Pro). The misacylated Cys-tRNA(Pro) is not edited by ProRS. In Actinobacillus pleuropneumoniae serotype 3 (strain JL03), this protein is Proline--tRNA ligase.